Consider the following 86-residue polypeptide: Small ribosomal subunit protein bS20 (86 aa).

The segment at 1–25 is disordered; it reads MANIKSQQKRNKTNERARLRNKSVK.

It belongs to the bacterial ribosomal protein bS20 family.

In terms of biological role, binds directly to 16S ribosomal RNA. The chain is Small ribosomal subunit protein bS20 from Mycobacterium avium (strain 104).